Reading from the N-terminus, the 203-residue chain is Ribosomal RNA small subunit methyltransferase G (203 aa).

S-adenosyl-L-methionine contacts are provided by residues glycine 73, leucine 78, 124 to 125 (VE), and arginine 138.

This sequence belongs to the methyltransferase superfamily. RNA methyltransferase RsmG family.

The protein localises to the cytoplasm. It carries out the reaction guanosine(527) in 16S rRNA + S-adenosyl-L-methionine = N(7)-methylguanosine(527) in 16S rRNA + S-adenosyl-L-homocysteine. Specifically methylates the N7 position of guanine in position 527 of 16S rRNA. This chain is Ribosomal RNA small subunit methyltransferase G, found in Glaesserella parasuis serovar 5 (strain SH0165) (Haemophilus parasuis).